The following is a 1115-amino-acid chain: MERATGPGSLARTLLLPLLLGLVAGTVTARRTSDLLAPTAEAAFGLGAAAAPTSATRVPATGAVIAAEVTVEDSEALPAAAGEQEAREPEPEPEEEPDIRPCGRSLVIISTLDGRIAALDPENHGKKQWDLDVGSGSLVSSSLSKPEVFGNKMIIPSLDGDLFQWDRDRESMETVPFTVESLLESSYKFGDDVVLVGGKSLTTYGLSAYSGKVRYICSALGCRQWDNDEMEQEEDILLLQRTQKTVRAVGPRSGNEKWNFSVGHFELRYIPDMETRAGFIESTLKPSGNKEQSKIISDVEEQEAVMMDTVIKVSVADWKVMAFNKKGGHLEWEYQFCTPIASAWLVKDGKVIPISLFDDTSYAPNDGVLEDEEDIVEAARGATENSVYLGMYRGQLYLQSSVRISEKFPTSPKALESVSSENAIIPLPTIKWKPLIHSPSRTPVLVGSDEFDKCLSNDKFSHEEYSNGALSILQYPYDNGYYLPYYKRERNKRSTQITVRFLDNPNYKNIRKKDPVLLLHWWKEIVGTIVFCIVATTFIVRRLFHPHPHRQRKESETQCQTENKYDAVSGEANDSSWNDIKNSGYVSRYLTDFEPIQCMGRGGFGVVFEARNKVDDCNYAIKRIRLPNRELAREKVMREVKALAKLEHPGIVRYFNAWLEAPPEKWQEKMDEIWLKDDSTDWPLSSPSPVDAPSVKIRRMDPFSTKECIEIIAPSPHSSRSFSVGISCSQTSSSESQFSPLEFSGMDHGNVSKSADAVCQLQDSCLTDCEGEDGTMDGNDEGHSFELCPSEASPYIRSRERTSSSIVFEDSGCDNASSKEEPRMNQPPVGNHYANKLSALRHSGSKSSEPTVSVSPSRPTTLSLDLTKSSVGKLQPSSPKVYLYIQMQLCRKENLKDWLNSRCTIEARERSVCLHIFLQIAEAVEFLHSKGLMHRDLKPSNIFFTMDDVVKVGDFGLVTAMDQDEEDQMVLTPMPGYARHTGQVGTKLYMSPEQIHGNSYSHKVDIFSLGLILFELLYPFGTQMERVRILTDVRDLKFPPLFAQKYPREYAMVQDMLSPSPTERPEAASIIENAIFEDLEFPEKTLLRQRSRSMSSPGAKHSRHSSSPHSPLPSN.

An N-terminal signal peptide occupies residues 1-29 (MERATGPGSLARTLLLPLLLGLVAGTVTA). Over 30-514 (RRTSDLLAPT…PNYKNIRKKD (485 aa)) the chain is Extracellular. The segment at 74-101 (SEALPAAAGEQEAREPEPEPEEEPDIRP) is disordered. A glycan (N-linked (GlcNAc...) asparagine) is linked at Asn259. Residues 515 to 535 (PVLLLHWWKEIVGTIVFCIVA) traverse the membrane as a helical segment. At 536–1115 (TTFIVRRLFH…SSPHSPLPSN (580 aa)) the chain is on the cytoplasmic side. A Protein kinase domain is found at 593–1076 (FEPIQCMGRG…AASIIENAIF (484 aa)). An ATP-binding site is contributed by 599-607 (MGRGGFGVV). Tyr619 is subject to Phosphotyrosine; by autocatalysis. Lys622 provides a ligand contact to ATP. Residues 647-887 (EHPGIVRYFN…SPKVYLYIQM (241 aa)) are insert loop. Position 715 is a phosphoserine (Ser715). At Thr802 the chain carries Phosphothreonine. 2 disordered regions span residues 807–832 (VFED…VGNH) and 841–860 (RHSG…SRPT). Over residues 845-860 (SKSSEPTVSVSPSRPT) the composition is skewed to polar residues. The active-site Proton acceptor is Asp936. Thr981 carries the post-translational modification Phosphothreonine. The interval 1087–1115 (LRQRSRSMSSPGAKHSRHSSSPHSPLPSN) is disordered. Position 1093 is a phosphoserine (Ser1093).

The protein belongs to the protein kinase superfamily. Ser/Thr protein kinase family. GCN2 subfamily. As to quaternary structure, forms dimers with HSPA5/BIP in resting cells. Homotetramerizes in response to endoplasmic reticulum (ER) stress, leading to its activation. Interacts with HSP90B1/GRP94. Interacts with DNAJC3; inhibiting EIF2AK3/PERK activity. Interacts with ATAD3A; ATAD3A and EIF2S1/eIF-2-alpha occupy a common binding site within the cytoplasmic loop of EIF2AK3/PERK, leading to prevent EIF2AK3/PERK association with its substrate EIF2S1/eIF-2-alpha. Interacts with MFN2. Interacts with TMEM33. Interacts with PDIA6. Interacts with LACC1. Oligomerization of the N-terminal ER luminal domain by ER stress promotes EIF2AK3/PERK trans-autophosphorylation of the C-terminal cytoplasmic kinase domain at multiple residues including Thr-981 on the kinase activation loop. Autophosphorylated at Tyr-619 following endoplasmic reticulum stress, leading to activate its activity. Dephosphorylated at Tyr-619 by PTPN1/PTP1B, leading to inactivate its enzyme activity. Phosphorylation at Thr-802 by AKT (AKT1, AKT2 and/or AKT3) inactivates EIF2AK3/PERK. Post-translationally, ADP-ribosylated by PARP16 upon ER stress, which increases kinase activity.

The protein resides in the endoplasmic reticulum membrane. It carries out the reaction L-seryl-[protein] + ATP = O-phospho-L-seryl-[protein] + ADP + H(+). It catalyses the reaction L-threonyl-[protein] + ATP = O-phospho-L-threonyl-[protein] + ADP + H(+). The catalysed reaction is L-tyrosyl-[protein] + ATP = O-phospho-L-tyrosyl-[protein] + ADP + H(+). Inhibited by HSPA5/BIP in absence of stress. Perturbation in protein folding in the endoplasmic reticulum (ER) promotes reversible dissociation from HSPA5/BIP and oligomerization, resulting in trans-autophosphorylation and kinase activity induction. Inactivated following phosphorylation at Thr-802 by AKT (AKT1, AKT2 and/or AKT3). Inhibited by ATAD3A at mitochondria-endoplasmic reticulum contact sites, providing a safe haven for mitochondrial protein translation during ER stress. Metabolic-stress sensing protein kinase that phosphorylates the alpha subunit of eukaryotic translation initiation factor 2 (EIF2S1/eIF-2-alpha) in response to various stress, such as unfolded protein response (UPR). Key effector of the integrated stress response (ISR) to unfolded proteins: EIF2AK3/PERK specifically recognizes and binds misfolded proteins, leading to its activation and EIF2S1/eIF-2-alpha phosphorylation. EIF2S1/eIF-2-alpha phosphorylation in response to stress converts EIF2S1/eIF-2-alpha in a global protein synthesis inhibitor, leading to a global attenuation of cap-dependent translation, while concomitantly initiating the preferential translation of ISR-specific mRNAs, such as the transcriptional activators ATF4 and QRICH1, and hence allowing ATF4- and QRICH1-mediated reprogramming. The EIF2AK3/PERK-mediated unfolded protein response increases mitochondrial oxidative phosphorylation by promoting ATF4-mediated expression of COX7A2L/SCAF1, thereby increasing formation of respiratory chain supercomplexes. In contrast to most subcellular compartments, mitochondria are protected from the EIF2AK3/PERK-mediated unfolded protein response due to EIF2AK3/PERK inhibition by ATAD3A at mitochondria-endoplasmic reticulum contact sites. In addition to EIF2S1/eIF-2-alpha, also phosphorylates NFE2L2/NRF2 in response to stress, promoting release of NFE2L2/NRF2 from the BCR(KEAP1) complex, leading to nuclear accumulation and activation of NFE2L2/NRF2. Serves as a critical effector of unfolded protein response (UPR)-induced G1 growth arrest due to the loss of cyclin-D1 (CCND1). Involved in control of mitochondrial morphology and function. The polypeptide is Eukaryotic translation initiation factor 2-alpha kinase 3 (Bos taurus (Bovine)).